The chain runs to 520 residues: Putative cytochrome P450 CYP13A5 (520 aa).

Cys464 is a binding site for heme.

This sequence belongs to the cytochrome P450 family. Requires heme as cofactor.

Its function is as follows. Cytochromes P450 are a group of heme-thiolate monooxygenases. They oxidize a variety of structurally unrelated compounds, including steroids, fatty acids, and xenobiotics. The protein is Putative cytochrome P450 CYP13A5 (cyp-13A5) of Caenorhabditis elegans.